The chain runs to 309 residues: Ribonuclease Z (309 aa).

Residues His63, His65, Asp67, His68, His145, Asp216, and His274 each coordinate Zn(2+). Asp67 (proton acceptor) is an active-site residue.

It belongs to the RNase Z family. Homodimer. It depends on Zn(2+) as a cofactor.

It catalyses the reaction Endonucleolytic cleavage of RNA, removing extra 3' nucleotides from tRNA precursor, generating 3' termini of tRNAs. A 3'-hydroxy group is left at the tRNA terminus and a 5'-phosphoryl group is left at the trailer molecule.. In terms of biological role, zinc phosphodiesterase, which displays some tRNA 3'-processing endonuclease activity. Probably involved in tRNA maturation, by removing a 3'-trailer from precursor tRNA. This Streptococcus thermophilus (strain CNRZ 1066) protein is Ribonuclease Z.